Reading from the N-terminus, the 347-residue chain is Zinc finger protein CONSTANS-LIKE 2 (347 aa).

Residues cysteine 16, cysteine 19, cysteine 39, histidine 44, cysteine 59, cysteine 62, cysteine 82, and histidine 87 each coordinate Zn(2+). Residues 16–58 (CDTCRSAACTVYCEADSAYLCTTCDARVHAANRVASRHERVRV) form a B box-type 1; atypical zinc finger. The B box-type 2; atypical zinc finger occupies 59–101 (CQSCESAPAAFLCKADAASLCTACDAEIHSANPLARRHQRVPI). Residues 278–320 (REARVLRYREKKKTRKFDKTIRYASRKAYAEIRPRIKGRFAKR) form the CCT domain.

The protein belongs to the CONSTANS family. Highly expressed in leaves. Expressed at lower levels in stems, flowers and siliques. Not detected in roots.

The protein resides in the nucleus. In terms of biological role, putative transcription factor. Does not affect flowering time. The protein is Zinc finger protein CONSTANS-LIKE 2 (COL2) of Arabidopsis thaliana (Mouse-ear cress).